Consider the following 837-residue polypeptide: MEPAAGTPGPLIMNNKQPQPPPPPPPATAQPPPGAPRTAGGLLPGGKAREFNRNQRKDSEGYSESPDLEFEYADTDKWAAELSELYSYTEGPEFLMNRKCFEEDFRMHVTDKKWTELDTNQHRTHAMRLLDGLEVTAREKRLKVARAILYVAQGTFGECSSEAEVQSWMRYNTFLLLEVGTFNALVELLNMEIDNSAACSSAVRKPAISLADSTDLRVLLNIMYLIVETVHQECEGDKAEWRTMRQTFRAELGSPLYNNEPFAIMLFGMVTKFCSGHAPHFPMKKVLLLLWKTVLCTLGGFEELQSMKAEKRAILGLPPLPEDSIKVIRNMRAASPPASASDLIEQQQKRGRREHKALIKQDNLDAFNERDPYKADDSREEEEENDDDNSLEGETFPLERDEVMPPPLQHPQTDRLTCPKGLPWAPKVREKDIEMFLESSRSKFIGYTLGSDTNTVVGLPRPIHESIKTLKQHKYTSIAEVQAQMEEEYLRSPLSGGEEEVEQVPAETLYQGLLPSLPQYMIALLKILLAAAPTSKAKTDSINILADVLPEEMPTTVLQSMKLGVDVNRHKEVIVKAISAVLLLLLKHFKLNHVYQFEYMAQHLVFANCIPLILKFFNQNIMSYITAKNSISVLDYPHCVVHELPELTAESLEAGDNNQFCWRNLFSCINLLRILNKLTKWKHSRTMMLVVFKSAPILKRALKVKQAMMQLYVLKLLKVQTKYLGRQWRKSNMKTMSAIYQKVRHRLNDDWAYGNDLDARPWDFQAEECALRANIERFNARRYDRAHSNPDFLPVDNCLQSVLGQRVDLPEDFQMNYDLWLEREVFSKPISWEELLQ.

Residue methionine 1 is modified to N-acetylmethionine. Residues methionine 1–aspartate 67 form a disordered region. Positions proline 18–alanine 35 are enriched in pro residues. Basic and acidic residues predominate over residues lysine 47 to glutamate 60. A phosphoserine mark is found at serine 59, serine 335, and serine 339. Residues proline 336 to proline 423 are disordered. A compositionally biased stretch (basic and acidic residues) spans lysine 356–aspartate 377. The span at serine 378–leucine 391 shows a compositional bias: acidic residues. The residue at position 788 (serine 788) is a Phosphoserine. Positions aspartate 796–glutamine 837 are required for STRIPAK core complex formation.

The protein belongs to the STRIP family. In terms of assembly, part of the core of STRIPAK complexes composed of PP2A catalytic and scaffolding subunits, the striatins (PP2A regulatory subunits), the striatin-associated proteins MOB4, STRIP1 and STRIP2, PDCD10 and members of the STE20 kinases, such as STK24 and STK26. The STRIPAK complex can be extended by adapter proteins such as SLMAP:SIKE1, CTTNBP2 or CTTNBP2NL. Interacts with CDC42BPB. Interacts with CTTNBP2NL.

Its subcellular location is the cytoplasm. Functionally, plays a role in the regulation of cell morphology and cytoskeletal organization. Required in the cortical actin filament dynamics and cell shape. Part of the striatin-interacting phosphatase and kinase (STRIPAK) complexes. STRIPAK complexes have critical roles in protein (de)phosphorylation and are regulators of multiple signaling pathways including Hippo, MAPK, nuclear receptor and cytoskeleton remodeling. Different types of STRIPAK complexes are involved in a variety of biological processes such as cell growth, differentiation, apoptosis, metabolism and immune regulation. This Bos taurus (Bovine) protein is Striatin-interacting protein 1 (STRIP1).